Consider the following 408-residue polypeptide: RNA exonuclease 4 (408 aa).

The tract at residues 27-70 (TKEKDVSNSKAHNSRSSQSPSSSLRSSSRIQRKSKHSQGVGQYM) is disordered. Over residues 40–55 (SRSSQSPSSSLRSSSR) the composition is skewed to low complexity. The region spanning 131 to 292 (QYLAIDCEMV…YRLHKKEWER (162 aa)) is the Exonuclease domain. The span at 310–322 (PEHVLGKRGHDEK) shows a compositional bias: basic and acidic residues. A disordered region spans residues 310–408 (PEHVLGKRGH…GESWWEQPAA (99 aa)). Residues 343-357 (GNGGGRQQFPGGGRK) show a composition bias toward gly residues. The segment covering 372 to 384 (QRVDENGRGDGTS) has biased composition (basic and acidic residues).

It belongs to the REXO4 family.

The protein localises to the nucleus. Its function is as follows. Exoribonuclease involved in ribosome biosynthesis. Involved in the processing of ITS1, the internal transcribed spacer localized between the 18S and 5.8S rRNAs. The sequence is that of RNA exonuclease 4 (REX4) from Cryptococcus neoformans var. neoformans serotype D (strain B-3501A) (Filobasidiella neoformans).